Consider the following 349-residue polypeptide: Terpene cyclase janA (349 aa).

Asparagine 80 carries an N-linked (GlcNAc...) asparagine glycan. The next 6 membrane-spanning stretches (helical) occupy residues 81–101, 116–136, 155–175, 189–209, 223–243, and 308–328; these read LSLYGVAFASALVPMWLVIVL, LAFLAGPLVQCLGPGLVIPAI, IGFYPSSMIIGYILPLILAAL, LIAVWQGWPVYTSLIMLIIHY, IACAFAFACSTAGHLAFLWFA, and VILIFGMAGVVFLGPCSVALL.

Belongs to the membrane-bound ascI terpene cyclase family.

The protein localises to the membrane. It functions in the pathway secondary metabolite biosynthesis. Part of the gene cluster that mediates the biosynthesis of the indole diterpenes janthitremanes such as shearinine K or shearinine A. The geranylgeranyl diphosphate (GGPP) synthase janG catalyzes the first step in janthitremane biosynthesis via conversion of farnesyl pyrophosphate and isopentyl pyrophosphate into geranylgeranyl pyrophosphate (GGPP). Condensation of indole-3-glycerol phosphate with GGPP by the prenyl transferase janC then forms 3-geranylgeranylindole (3-GGI). Epoxidation by the FAD-dependent monooxygenase janM leads to a epoxidized-GGI that is substrate of the terpene cyclase janB for cyclization to yield paspaline. Paspaline is subsequently converted to 13-desoxypaspaline by the cytochrome P450 monooxygenase janP, via beta-PC-M6 in a series of alpha-face oxidations. The cytochrome P450 monooxygenase janQ is proposed to carry out sequential beta-face oxidation steps at C-7 and C-13 of 13-desoxypaspaline to form paspalicine and paspalinine respectively. The indole diterpene prenyltransferase janD may then convert paspalinine into shearinine K which is substrate of janO and/or additional enzymes for oxidation and cyclization to generate shearinine A. This Penicillium janthinellum (Penicillium vitale) protein is Terpene cyclase janA.